The following is an 804-amino-acid chain: Pentatricopeptide repeat-containing protein At4g35130, chloroplastic (804 aa).

The N-terminal 19 residues, Met1–Lys19, are a transit peptide targeting the chloroplast. PPR repeat units follow at residues Asn63 to Ala93, Asp94 to Ala128, Asp129 to Ser163, Asp164 to Arg194, Asp195 to Pro229, Asp230 to Thr264, Asp266 to Arg296, Asn297 to Pro332, Asp333 to Pro363, His364 to Lys394, Asn395 to Pro429, Asp430 to Ser464, Asn465 to Lys495, Asp496 to Pro530, Asn531 to Glu561, and Gly567 to Val597. Residues Ile602–Lys677 form a type E motif region. The tract at residues Gly678–Gly708 is type E(+) motif. The interval Glu710–Trp804 is type DYW motif.

This sequence belongs to the PPR family. PCMP-H subfamily.

It is found in the plastid. Its subcellular location is the chloroplast. The chain is Pentatricopeptide repeat-containing protein At4g35130, chloroplastic (PCMP-H27) from Arabidopsis thaliana (Mouse-ear cress).